The following is a 347-amino-acid chain: Spermidine/putrescine import ATP-binding protein PotA (347 aa).

The region spanning 6–236 (IELRDISKHY…PKNSFVAKFI (231 aa)) is the ABC transporter domain. 38 to 45 (GPSGCGKT) is a binding site for ATP.

It belongs to the ABC transporter superfamily. Spermidine/putrescine importer (TC 3.A.1.11.1) family. In terms of assembly, the complex is composed of two ATP-binding proteins (PotA), two transmembrane proteins (PotB and PotC) and a solute-binding protein (PotD).

The protein localises to the cell membrane. It catalyses the reaction ATP + H2O + polyamine-[polyamine-binding protein]Side 1 = ADP + phosphate + polyamineSide 2 + [polyamine-binding protein]Side 1.. In terms of biological role, part of the ABC transporter complex PotABCD involved in spermidine/putrescine import. Responsible for energy coupling to the transport system. This is Spermidine/putrescine import ATP-binding protein PotA from Clostridioides difficile (strain 630) (Peptoclostridium difficile).